A 154-amino-acid chain; its full sequence is MAKKKQNTENYLAQNRKARFNYAIAETFEAGISLTGTEIKSVRAGQITIGDGFVTIHNGNALLTNVHISSYVQGNQFNVDPLRTRQLLLHKREIRVLEKATQEQGVTIVPLKVYLKHGFAKVLVGIGRGKKKYDKREDIKKRDQERELSRRFKN.

The disordered stretch occupies residues 134–154 (DKREDIKKRDQERELSRRFKN).

It belongs to the SmpB family.

Its subcellular location is the cytoplasm. Required for rescue of stalled ribosomes mediated by trans-translation. Binds to transfer-messenger RNA (tmRNA), required for stable association of tmRNA with ribosomes. tmRNA and SmpB together mimic tRNA shape, replacing the anticodon stem-loop with SmpB. tmRNA is encoded by the ssrA gene; the 2 termini fold to resemble tRNA(Ala) and it encodes a 'tag peptide', a short internal open reading frame. During trans-translation Ala-aminoacylated tmRNA acts like a tRNA, entering the A-site of stalled ribosomes, displacing the stalled mRNA. The ribosome then switches to translate the ORF on the tmRNA; the nascent peptide is terminated with the 'tag peptide' encoded by the tmRNA and targeted for degradation. The ribosome is freed to recommence translation, which seems to be the essential function of trans-translation. This chain is SsrA-binding protein, found in Leuconostoc mesenteroides subsp. mesenteroides (strain ATCC 8293 / DSM 20343 / BCRC 11652 / CCM 1803 / JCM 6124 / NCDO 523 / NBRC 100496 / NCIMB 8023 / NCTC 12954 / NRRL B-1118 / 37Y).